A 314-amino-acid polypeptide reads, in one-letter code: Cytochrome bo(3) ubiquinol oxidase subunit 2 (314 aa).

Positions Met1 to Gly23 are cleaved as a signal peptide. Cys24 is lipidated: N-palmitoyl cysteine. The S-diacylglycerol cysteine moiety is linked to residue Cys24. Over Cys24 to Leu42 the chain is Periplasmic. Residues Ile43–Val63 form a helical membrane-spanning segment. Residues Phe64–Lys86 are Cytoplasmic-facing. A helical membrane pass occupies residues Ile87 to Tyr107. The Periplasmic segment spans residues His108–Glu314. Residues Tyr278–Ser293 are compositionally biased toward basic and acidic residues. Residues Tyr278–Glu314 form a disordered region.

It belongs to the cytochrome c oxidase subunit 2 family. Heterooctamer of two A chains, two B chains, two C chains and two D chains.

The protein resides in the cell inner membrane. Cytochrome bo(3) ubiquinol terminal oxidase is the component of the aerobic respiratory chain of E.coli that predominates when cells are grown at high aeration. Has proton pump activity across the membrane in addition to electron transfer, pumping 2 protons/electron. The polypeptide is Cytochrome bo(3) ubiquinol oxidase subunit 2 (cyoA) (Pseudomonas putida (Arthrobacter siderocapsulatus)).